Consider the following 274-residue polypeptide: S-methyl-5'-thioadenosine phosphorylase (274 aa).

Phosphate contacts are provided by residues Ser-20, 62–63 (RH), and 95–96 (SA). Met-194 is a substrate binding site. Thr-195 provides a ligand contact to phosphate. 218 to 220 (DYD) contributes to the substrate binding site.

The protein belongs to the PNP/MTAP phosphorylase family. MTAP subfamily. As to quaternary structure, homohexamer. Dimer of a homotrimer.

It catalyses the reaction S-methyl-5'-thioadenosine + phosphate = 5-(methylsulfanyl)-alpha-D-ribose 1-phosphate + adenine. The protein operates within amino-acid biosynthesis; L-methionine biosynthesis via salvage pathway; S-methyl-5-thio-alpha-D-ribose 1-phosphate from S-methyl-5'-thioadenosine (phosphorylase route): step 1/1. Catalyzes the reversible phosphorylation of S-methyl-5'-thioadenosine (MTA) to adenine and 5-methylthioribose-1-phosphate. Involved in the breakdown of MTA, a major by-product of polyamine biosynthesis. Responsible for the first step in the methionine salvage pathway after MTA has been generated from S-adenosylmethionine. Has broad substrate specificity with 6-aminopurine nucleosides as preferred substrates. This is S-methyl-5'-thioadenosine phosphorylase from Hyperthermus butylicus (strain DSM 5456 / JCM 9403 / PLM1-5).